Here is a 103-residue protein sequence, read N- to C-terminus: Large ribosomal subunit protein bL21 (103 aa).

Belongs to the bacterial ribosomal protein bL21 family. In terms of assembly, part of the 50S ribosomal subunit. Contacts protein L20.

Its function is as follows. This protein binds to 23S rRNA in the presence of protein L20. The sequence is that of Large ribosomal subunit protein bL21 from Haemophilus ducreyi (strain 35000HP / ATCC 700724).